A 1887-amino-acid polypeptide reads, in one-letter code: Protein TIC 214 (1887 aa).

6 helical membrane passes run I18–G38, F64–L84, P87–H107, L124–L144, V172–I192, and I221–I241. Disordered stretches follow at residues E248–D300, E786–R805, and L1569–P1603. Acidic residues predominate over residues V256–T268. Residues K775–A816 adopt a coiled-coil conformation. The span at R1578–N1597 shows a compositional bias: basic and acidic residues.

Belongs to the TIC214 family. In terms of assembly, part of the Tic complex.

It localises to the plastid. The protein resides in the chloroplast inner membrane. Involved in protein precursor import into chloroplasts. May be part of an intermediate translocation complex acting as a protein-conducting channel at the inner envelope. The sequence is that of Protein TIC 214 from Solanum bulbocastanum (Wild potato).